Consider the following 192-residue polypeptide: CASP-like protein 1E1 (192 aa).

Residues 1-22 (MDSQNKNSVDAMDGIESRGMKE) form a disordered region. Topologically, residues 1–29 (MDSQNKNSVDAMDGIESRGMKERGGRTNS) are cytoplasmic. The helical transmembrane segment at 30-50 (FLVLRVLAFVLTSTAAIVHGV) threads the bilayer. Residues 51-81 (NNQTETVPIQLTSSMPPLYVPVVAKWHYLSA) lie on the Extracellular side of the membrane. An N-linked (GlcNAc...) asparagine glycan is attached at asparagine 52. A helical membrane pass occupies residues 82–102 (FVFFVVSNAIACSYAAISVML). Residues 103–118 (SFCGKKSMVPIILTLD) lie on the Cytoplasmic side of the membrane. The chain crosses the membrane as a helical span at residues 119–139 (LLMVALLFSSNGAATAIGVMG). Residues 140-161 (YKGNSHVKWNKVCNVFGKFCNQ) are Extracellular-facing. Residues 162-182 (VAASVVLSLIGSIVFVLLVML) traverse the membrane as a helical segment. Residues 183–192 (TAFRLHNKSK) lie on the Cytoplasmic side of the membrane.

The protein belongs to the Casparian strip membrane proteins (CASP) family. Homodimer and heterodimers.

It is found in the cell membrane. The sequence is that of CASP-like protein 1E1 from Ricinus communis (Castor bean).